The following is a 497-amino-acid chain: mRNA cleavage and polyadenylation factor CLP1 (497 aa).

Residues glutamate 34, lysine 73, and 157–162 (HSGKTS) contribute to the ATP site.

The protein belongs to the Clp1 family. Clp1 subfamily. Component of a pre-mRNA cleavage factor complex. Interacts directly with PCF11.

It is found in the nucleus. Functionally, required for endonucleolytic cleavage during polyadenylation-dependent pre-mRNA 3'-end formation. The protein is mRNA cleavage and polyadenylation factor CLP1 of Debaryomyces hansenii (strain ATCC 36239 / CBS 767 / BCRC 21394 / JCM 1990 / NBRC 0083 / IGC 2968) (Yeast).